A 311-amino-acid chain; its full sequence is ADP-ribosyl cyclase/cyclic ADP-ribose hydrolase 2 (311 aa).

Residues 1–24 (MAVQGGLLSLWLWLWLSLLTVLLG) form the signal peptide. Cystine bridges form between cysteine 46–cysteine 60, cysteine 76–cysteine 156, and cysteine 137–cysteine 150. N-linked (GlcNAc...) asparagine glycosylation is found at asparagine 59 and asparagine 88. Tryptophan 102 lines the NAD(+) pocket. Nicotinamide is bound at residue tryptophan 102. Asparagine 141 is a glycosylation site (N-linked (GlcNAc...) asparagine). Residue tryptophan 165 participates in NAD(+) binding. An N-linked (GlcNAc...) asparagine glycan is attached at asparagine 185. Glutamate 203 is a binding site for NAD(+). Cystine bridges form between cysteine 231-cysteine 252 and cysteine 264-cysteine 273. Serine 286 carries GPI-anchor amidated serine lipidation. A propeptide spanning residues 287 to 311 (ASLHAIGDASLLISLLVALASSSQA) is cleaved from the precursor.

The protein belongs to the ADP-ribosyl cyclase family. As to quaternary structure, homodimer. Expressed in the bone marrow, spleen and thymus in lymphoid organs, and the lung, kidney and heart in non-lymphoid organs.

The protein localises to the cell membrane. The catalysed reaction is NAD(+) + H2O = ADP-D-ribose + nicotinamide + H(+). It carries out the reaction NAD(+) = cyclic ADP-beta-D-ribose + nicotinamide + H(+). The enzyme catalyses cyclic ADP-beta-D-ribose + H2O = ADP-D-ribose. Catalyzes both the synthesis of cyclic ADP-beta-D-ribose (cADPR) from NAD(+), and its hydrolysis to ADP-D-ribose (ADPR). Cyclic ADPR is known to serve as an endogenous second messenger that elicits calcium release from intracellular stores, and thus regulates the mobilization of intracellular calcium. May be involved in pre-B-cell growth. This Mus musculus (Mouse) protein is ADP-ribosyl cyclase/cyclic ADP-ribose hydrolase 2 (Bst1).